We begin with the raw amino-acid sequence, 243 residues long: Small ribosomal subunit protein uS3 (243 aa).

The KH type-2 domain maps to 39–110 (IRTFIQKKYS…QVRINVVEVE (72 aa)). The disordered stretch occupies residues 221–243 (GAIPRRKGSRKPQQFEDRSNENS). Positions 233–243 (QQFEDRSNENS) are enriched in basic and acidic residues.

It belongs to the universal ribosomal protein uS3 family. In terms of assembly, part of the 30S ribosomal subunit. Forms a tight complex with proteins S10 and S14.

Functionally, binds the lower part of the 30S subunit head. Binds mRNA in the 70S ribosome, positioning it for translation. This chain is Small ribosomal subunit protein uS3, found in Prochlorococcus marinus subsp. pastoris (strain CCMP1986 / NIES-2087 / MED4).